Here is an 898-residue protein sequence, read N- to C-terminus: DNA topoisomerase 1 (898 aa).

A Toprim domain is found at 2–126 (SKLVIVESPT…IKRMVFHEIT (125 aa)). Mg(2+) contacts are provided by E8 and D95. The 443-residue stretch at 141 to 583 (DENLVHAQET…GFFLGESGLE (443 aa)) folds into the Topo IA-type catalytic domain. An interaction with DNA region spans residues 175–180 (SAGRVQ). The active-site O-(5'-phospho-DNA)-tyrosine intermediate is Y320. Residues 840–898 (AEKAGSGKKTSRKKATTTAKGTKKTTSKKASATGTAKKTTTKRTTRKKAASPDQSSEAG) form a disordered region. The segment covering 848–866 (KTSRKKATTTAKGTKKTTS) has biased composition (basic residues). A compositionally biased stretch (low complexity) spans 867 to 877 (KKASATGTAKK). The span at 878 to 888 (TTTKRTTRKKA) shows a compositional bias: basic residues.

This sequence belongs to the type IA topoisomerase family. In terms of assembly, monomer. Mg(2+) serves as cofactor.

The catalysed reaction is ATP-independent breakage of single-stranded DNA, followed by passage and rejoining.. In terms of biological role, releases the supercoiling and torsional tension of DNA, which is introduced during the DNA replication and transcription, by transiently cleaving and rejoining one strand of the DNA duplex. Introduces a single-strand break via transesterification at a target site in duplex DNA. The scissile phosphodiester is attacked by the catalytic tyrosine of the enzyme, resulting in the formation of a DNA-(5'-phosphotyrosyl)-enzyme intermediate and the expulsion of a 3'-OH DNA strand. The free DNA strand then undergoes passage around the unbroken strand, thus removing DNA supercoils. Finally, in the religation step, the DNA 3'-OH attacks the covalent intermediate to expel the active-site tyrosine and restore the DNA phosphodiester backbone. This Synechocystis sp. (strain ATCC 27184 / PCC 6803 / Kazusa) protein is DNA topoisomerase 1.